A 698-amino-acid chain; its full sequence is MPPLKVHAPYEPRGDQPQAIAQLVNGLNSGLVHQTLLGATGTGKTHTIARVIEQVQRPTLVMAHNKTLAAQLYAEFKEFFPENAVGYFVSYYDAYTPEAYVPSKDLYIEKEAQINEEIDRLRHEATQALFTRSDVIIVASVSAIYGLGSPTDYGQVALKLKTGEIRNRDKVLRTLIDLQFERNDLDFHRGTFRVRGDTLEIFPANAESAFRIEMWGDEIERMVEVDPLTGEILTQKDHIEVFPAKHFIPNADKMQAAIGDIRLELEQQLAHLEGEGKVLEAARLKQRTLYDLEIMEELGYCSGIENYSRHMDRRSEGQTPWTLLDYFPDDFLLVIDESHISVPQIRGMFNGDRSRKQTLVDFGFRLPSALDNRPLMFDEFSKHVHQAIYVSATPGVYEYQHHEQVVEQIIRPTGLLDPMVEVRRTRGQIDDLLGEIKRRVDTGSRVLVTTLTKRMAEDLTDYLKEMGVRTQYLHSDVDTIERIDILRDLRLGVFDVLVGINLLREGLDLPEVSLVAILDADKAGFLRSESSLVQIIGRAARHIDGTVLMYADTITPAMDYAISETRRRRQIQERYNQQHGIEPKGIVKAVRDLTEGMKKVAEKPAAYQTAANPDSMTKEELFKVINALEKQMKQAAKDLEFEKAALLRDQLTEMRQTLALIDNTALLESVNRKPRAKAAMVVEDTGKRKVKGRSRGKL.

Residues 25 to 183 (NGLNSGLVHQ…TLIDLQFERN (159 aa)) enclose the Helicase ATP-binding domain. 38–45 (GATGTGKT) contributes to the ATP binding site. The Beta-hairpin signature appears at 91 to 114 (YYDAYTPEAYVPSKDLYIEKEAQI). A Helicase C-terminal domain is found at 428–594 (QIDDLLGEIK…GIVKAVRDLT (167 aa)). The 36-residue stretch at 622–657 (FKVINALEKQMKQAAKDLEFEKAALLRDQLTEMRQT) folds into the UVR domain.

It belongs to the UvrB family. Forms a heterotetramer with UvrA during the search for lesions. Interacts with UvrC in an incision complex.

It localises to the cytoplasm. In terms of biological role, the UvrABC repair system catalyzes the recognition and processing of DNA lesions. A damage recognition complex composed of 2 UvrA and 2 UvrB subunits scans DNA for abnormalities. Upon binding of the UvrA(2)B(2) complex to a putative damaged site, the DNA wraps around one UvrB monomer. DNA wrap is dependent on ATP binding by UvrB and probably causes local melting of the DNA helix, facilitating insertion of UvrB beta-hairpin between the DNA strands. Then UvrB probes one DNA strand for the presence of a lesion. If a lesion is found the UvrA subunits dissociate and the UvrB-DNA preincision complex is formed. This complex is subsequently bound by UvrC and the second UvrB is released. If no lesion is found, the DNA wraps around the other UvrB subunit that will check the other stand for damage. This chain is UvrABC system protein B, found in Herpetosiphon aurantiacus (strain ATCC 23779 / DSM 785 / 114-95).